The chain runs to 130 residues: Sec-independent protein translocase protein TatB (130 aa).

Residues 2–22 (FANIGWGEMLVLVVVGLVVLG) form a helical membrane-spanning segment. A disordered region spans residues 108–130 (DAVASAQEAPDEPVRPPFDSDAT).

The protein belongs to the TatB family. The Tat system comprises two distinct complexes: a TatABC complex, containing multiple copies of TatA, TatB and TatC subunits, and a separate TatA complex, containing only TatA subunits. Substrates initially bind to the TatABC complex, which probably triggers association of the separate TatA complex to form the active translocon.

It is found in the cell membrane. Its function is as follows. Part of the twin-arginine translocation (Tat) system that transports large folded proteins containing a characteristic twin-arginine motif in their signal peptide across membranes. Together with TatC, TatB is part of a receptor directly interacting with Tat signal peptides. TatB may form an oligomeric binding site that transiently accommodates folded Tat precursor proteins before their translocation. The polypeptide is Sec-independent protein translocase protein TatB (Mycobacterium ulcerans (strain Agy99)).